Here is a 399-residue protein sequence, read N- to C-terminus: Zinc finger TRAF-type-containing protein 1 (399 aa).

Residues 1-13 are compositionally biased toward gly residues; sequence MSGAEEAGGGGPA. The disordered stretch occupies residues 1-20; that stretch reads MSGAEEAGGGGPAAGPAGAV. The segment at 106-151 adopts an RING-type; degenerate zinc-finger fold; sequence CTVCLDLPKASVYQCTNGHLMCAGCFIHLLADARLKEEQATCPNCR. A TRAF-type zinc finger spans residues 152 to 210; sequence CEISKSLCCRNLAVEKAVSELPSECGFCLRQFPRSLLERHQKEECQDRVTQCKYKRIGC.

It belongs to the ZFTRAF1 family. Interacts with LGALS3.

The protein localises to the cytoplasm. It is found in the perinuclear region. This chain is Zinc finger TRAF-type-containing protein 1, found in Rattus norvegicus (Rat).